Consider the following 113-residue polypeptide: Mini zinc finger protein 3 (113 aa).

The ZF-HD dimerization-type; degenerate zinc finger occupies tyrosine 24–valine 83. Residues aspartate 93–glutamate 113 are disordered. Positions glycine 97 to glutamate 113 are enriched in low complexity.

As to quaternary structure, homo- and heterodimers.

It localises to the cytoplasm. In terms of biological role, inhibits zinc finger homeodomain (ZHD) transcription factors, by interacting with them to prevent both their nuclear localization and their DNA-binding properties. The chain is Mini zinc finger protein 3 (MIF3) from Oryza sativa subsp. indica (Rice).